A 175-amino-acid chain; its full sequence is NADH dehydrogenase [ubiquinone] iron-sulfur protein 4, mitochondrial (175 aa).

The N-terminal 42 residues, 1–42 (MAAVSMSVALRQALWGRRVATVAAVSVSKVSTRSLSTSTWRL), are a transit peptide targeting the mitochondrion. Positions 149–175 (ERKVPKPKSKSYGANFSWNKRTRVSTK) are disordered. S173 is subject to Phosphoserine.

Belongs to the complex I NDUFS4 subunit family. As to quaternary structure, mammalian complex I is composed of 45 different subunits. This is a component of the iron-sulfur (IP) fragment of the enzyme. Interacts with BCAP31 and TOMM40; the interaction mediates its translocation to the mitochondria; the interaction with BCAP31 is direct. Post-translationally, phosphorylated.

Its subcellular location is the mitochondrion inner membrane. Accessory subunit of the mitochondrial membrane respiratory chain NADH dehydrogenase (Complex I), that is believed not to be involved in catalysis. Complex I functions in the transfer of electrons from NADH to the respiratory chain. The immediate electron acceptor for the enzyme is believed to be ubiquinone. The polypeptide is NADH dehydrogenase [ubiquinone] iron-sulfur protein 4, mitochondrial (NDUFS4) (Bos taurus (Bovine)).